We begin with the raw amino-acid sequence, 763 residues long: MSDGWSDSESAAKAKTGFGSGGGFGGGNNGGSGFGGGKNGGTGFGGGNTGGSGFGGGNTGGSGFGGGKTGGSGFGGGNTCGSGFGGGSTGGSPYGGASSGFGGSTATSGFGSGEKSSAFGGSGGFGGSATGFGSGGGSFGGGNSGFGEGGHGGGERNNNCFNCQQPGHRSSDCPEPRKEREPRVCYNCQQPGHTSRECTEERKPREGRTGGFGGGAGFGNNGGNDGFGGDGGFGGGEERGPMKCFNCKGEGHRSAECPEPPRGCFNCGEQGHRSNECPNPAKPREGVEGEGPKATYVPVEDNMEDVFNMQKISEGLMFNKFFDAEVKLTSSEKTVGIKPCKTFAEANLTETMQKNVAHAGYSKTTPIQQYALPLVHQGYDIMACAQTGSGKTAAFLLPIMTRLIDDNNLNTAGEGGCYPRCIILTPTRELADQIYNEGRKFAYQTMMEIKPVYGGLAVGYNKGQIEKGATIIVGTVGRIKHFCEEGTIKLDKCRFFVLDEADRMIDAMGFGTDIETIVNYDSMPRKENRQTLMFSATFPDSVQEAARAFLRENYVMIAIDKIGAANKCVLQEFERCERSEKKDKLLELLGIDIDSYTTEKSAEVYTKKTMVFVSQRAMADTLASILSSAQVPAITIHGAREQRERSEALRQFRNGSKPVLIATAVAERGLDIKGVDHVINYDMPDNIDDYIHRIGRTGRVGNSGRATSFISEDCSLLSELVGVLADAQQIVPDWMQGAAGGNYGASGFGSSVPTQVPQDEEGW.

The tract at residues 1 to 30 is disordered; sequence MSDGWSDSESAAKAKTGFGSGGGFGGGNNG. Positions 18–30 are enriched in gly residues; sequence FGSGGGFGGGNNG. Tandem repeats lie at residues 24–33, 34–43, 44–53, 54–63, 64–73, 74–83, and 84–93. Residues 24-93 are 7 X 10 AA tandem repeats, Gly-rich; that stretch reads FGGGNNGGSG…FGGGSTGGSP (70 aa). 2 CCHC-type zinc fingers span residues 158 to 175 and 183 to 200; these read NNCFNCQQPGHRSSDCPE and RVCYNCQQPGHTSRECTE. The tract at residues 193–230 is disordered; the sequence is HTSRECTEERKPREGRTGGFGGGAGFGNNGGNDGFGGD. A compositionally biased stretch (basic and acidic residues) spans 194–208; it reads TSRECTEERKPREGR. Over residues 209-230 the composition is skewed to gly residues; the sequence is TGGFGGGAGFGNNGGNDGFGGD. CCHC-type zinc fingers lie at residues 242–259 and 262–279; these read MKCFNCKGEGHRSAECPE and RGCFNCGEQGHRSNECPN. The Q motif motif lies at 341–369; the sequence is KTFAEANLTETMQKNVAHAGYSKTTPIQQ. In terms of domain architecture, Helicase ATP-binding spans 372–556; it reads LPLVHQGYDI…RAFLRENYVM (185 aa). ATP is bound at residue 385–392; it reads AQTGSGKT. A Phosphodegron motif is present at residues 423–427; the sequence is ILTPT. The DEAD box signature appears at 499 to 502; sequence DEAD. The region spanning 592 to 739 is the Helicase C-terminal domain; that stretch reads DIDSYTTEKS…IVPDWMQGAA (148 aa).

The protein belongs to the DEAD box helicase family. DDX4/VASA subfamily. As to quaternary structure, interacts with csn-5; this may prevent glh-1 degradation induced by kgb-1. Interacts with zyx-1. Interacts (via the N-terminal region containing the four CCHC zinc fingers) with pan-1. Interacts with kgb-1; this may promote glh-1 degradation by the proteasome. Phosphorylated by kgb-1 (in vitro); this may be responsible for its degradation by the proteasome.

It localises to the cytoplasm. The protein localises to the cytoplasmic granule. It is found in the perinuclear region. It carries out the reaction ATP + H2O = ADP + phosphate + H(+). Functionally, probable ATP-binding RNA helicase. May act redundantly with the P-granule component glh-4 to regulate the formation of the granular structure of P-granules in embryos. Plays a role in positively regulating the localization of pgl-1 to P-granules. May play a role in transgenerational epigenetic inheritance. May protect somatic cells from excessive apoptosis during normal development. In Caenorhabditis elegans, this protein is ATP-dependent RNA helicase glh-1.